The following is a 415-amino-acid chain: Alpha-N-acetylgalactosaminidase (415 aa).

A signal peptide spans Met-1 to Met-17. Disulfide bonds link Cys-38/Cys-80, Cys-42/Cys-49, and Cys-127/Cys-158. Substrate is bound by residues Asp-78–Asp-79 and Lys-154. The active-site Nucleophile is the Asp-156. Asn-177 is a glycosylation site (N-linked (GlcNAc...) asparagine). A disulfide bond links Cys-187 and Cys-209. Ser-188 contacts substrate. A glycan (N-linked (GlcNAc...) asparagine) is linked at Asn-201. Substrate-binding residues include Arg-213 and Asp-217. Asp-217 acts as the Proton donor in catalysis. Phosphoserine occurs at positions 322 and 332. An N-linked (GlcNAc...) asparagine glycan is attached at Asn-385.

It belongs to the glycosyl hydrolase 27 family. Homodimer.

It is found in the lysosome. The catalysed reaction is Cleavage of non-reducing alpha-(1-&gt;3)-N-acetylgalactosamine residues from human blood group A and AB mucin glycoproteins, Forssman hapten and blood group A lacto series glycolipids.. It catalyses the reaction a neolactoside IV(3)-alpha-GalNAc,IV(2)-alpha-Fuc-nLc4Cer(d18:1(4E)) + H2O = a neolactoside IV(2)-alpha-Fuc-nLc4Cer(d18:1(4E)) + N-acetyl-alpha-D-galactosamine. It carries out the reaction a neolactoside IV(3)-alpha-GalNAc,IV(2)-alpha-Fuc-nLc4Cer(d18:0) + H2O = a neolactoside IV(2)-alpha-Fuc-nLc4Cer(d18:0) + N-acetyl-alpha-D-galactosamine. The enzyme catalyses a globoside IV3GalNAc-Gb4Cer + H2O = N-acetyl-alpha-D-galactosamine + a globoside Gb4Cer. In terms of biological role, removes terminal alpha-N-acetylgalactosamine residues from glycolipids and glycopeptides. Required for the breakdown of glycolipids. This chain is Alpha-N-acetylgalactosaminidase (Naga), found in Mus musculus (Mouse).